The primary structure comprises 149 residues: MRYNEKELLCLSRQRAEKAAELGMRGPKKGSVLKKRLVKLVVNFLFYFRIDEEEPIGALLLEHCRVSKEDEKGFSIHFIDEPEKKYMFECSSQEQCVEWVEALTNASYEFMRRSLMFYRNEILKMTGKDPLEQYGISGESRFQLENASL.

Positions 15–108 (RAEKAAELGM…WVEALTNASY (94 aa)) constitute a PH domain.

This Xenopus laevis (African clawed frog) protein is Pleckstrin homology domain-containing family J member 1 (plekhj1).